Reading from the N-terminus, the 81-residue chain is Small ribosomal subunit protein bS20 (81 aa).

Belongs to the bacterial ribosomal protein bS20 family.

In terms of biological role, binds directly to 16S ribosomal RNA. In Mycoplasma capricolum subsp. capricolum (strain California kid / ATCC 27343 / NCTC 10154), this protein is Small ribosomal subunit protein bS20.